Consider the following 213-residue polypeptide: CASP-like protein 2A1 (213 aa).

Over 1-41 (MSKMAEEKAAAVGGLGGAGAADAAQQQQLAAGEAAAARVRP) the chain is Cytoplasmic. The helical transmembrane segment at 42–62 (VETLLRAAPLGLCVAAMTVML) threads the bilayer. Over 63-83 (RNQQSNEYGAVAYSDLGGFKY) the chain is Extracellular. The helical transmembrane segment at 84–104 (LVYANGLCAAYSLVSAFYTAV) threads the bilayer. The Cytoplasmic portion of the chain corresponds to 105–113 (PRPATVSRS). A helical membrane pass occupies residues 114-134 (WLVFLLDQVFTYLILAAGAAA). Residues 135–166 (AELLYLAYNGDKEVTWSEACGVFGSFCRQART) lie on the Extracellular side of the membrane. The helical transmembrane segment at 167–187 (SVAITFGTVLCFILLSLISSY) threads the bilayer. The Cytoplasmic portion of the chain corresponds to 188–213 (RLFSAYEAPPSSALGSKGVEIAAYPR).

This sequence belongs to the Casparian strip membrane proteins (CASP) family. In terms of assembly, homodimer and heterodimers.

It is found in the cell membrane. The polypeptide is CASP-like protein 2A1 (Zea mays (Maize)).